A 142-amino-acid chain; its full sequence is Hemoglobin subunit alpha-C (142 aa).

An N-acetylalanine modification is found at A2. The 141-residue stretch at 2–142 folds into the Globin domain; that stretch reads ALNCDDKAHI…VSGLLTSKYR (141 aa). An O2-binding site is contributed by H59. H88 is a binding site for heme b.

The protein belongs to the globin family. As to quaternary structure, heterotetramer of either two alpha-B chains or two alpha-C chains and two beta chains. The two major hemoglobins, B and C, associate upon deoxygenation to form a trimer of tetramers, BC2, that has a much lower affinity for oxygen than either component alone. Red blood cells.

In terms of biological role, the alpha-C chain is a component of adult hemoglobin C. This chain is Hemoglobin subunit alpha-C, found in Aquarana catesbeiana (American bullfrog).